The primary structure comprises 78 residues: MVQPDSSSLAEVLDRVLDKGVVVDVWARISLVGIEILTVEARVVAASVDTFLHYAEEIAKIEQAELTAGAEAAPTPEA.

The interval 9–19 (LAEVLDRVLDK) is alpha helix 1. Residues 23 to 31 (VDVWARISL) are beta-strand 1. Residues 32-34 (VGI) are beta turn. The beta-strand 2 stretch occupies residues 35 to 43 (EILTVEARV). An alpha helix 2 region spans residues 48 to 67 (VDTFLHYAEEIAKIEQAELT).

This sequence belongs to the gas vesicle GvpA family. In terms of assembly, the gas vesicle shell is 2 nm thick and consists of a single layer of this protein. It forms helical ribs nearly perpendicular to the long axis of the vesicle. Modeled as antiparallel homodimers.

Its subcellular location is the gas vesicle shell. Gas vesicles are hollow, gas filled proteinaceous nanostructures found in some microorganisms. During planktonic growth they allow positioning of the organism at a favorable depth for light or nutrient acquisition. GvpA forms the protein shell. This gene replaces p-gvpA of H.salinarum very poorly, only about 1% of GVs are formed; the few gas vesicles formed are quite strong with a very high critical collapse pressure (CCP) of 0.213 MPa. Its function is as follows. Expression of a 9.5 kb mc-vac DNA fragment containing 2 divergently transcribed regions (gvpD-gvpE-gvpF-gvpG-gvpH-gvpI-gvpJ-gvpK-gvpL-gvpM and gvpA-gvpC-gvpN-gvpO) allows H.volcanii to produce gas vesicles. The chain is Gas vesicle protein A from Haloferax mediterranei (strain ATCC 33500 / DSM 1411 / JCM 8866 / NBRC 14739 / NCIMB 2177 / R-4) (Halobacterium mediterranei).